The primary structure comprises 391 residues: Putative F-box protein At1g47730 (391 aa).

Over residues 1–12 the composition is skewed to basic and acidic residues; the sequence is MEQREEKTENIQ. Residues 1 to 25 are disordered; it reads MEQREEKTENIQRKRSRGKSSSSSL. The 50-residue stretch at 19–68 folds into the F-box domain; that stretch reads KSSSSSLPLDLTSEIFSRLPAKSVVRFRCVSKLWSSITTAPYFTNSFETR.

The polypeptide is Putative F-box protein At1g47730 (Arabidopsis thaliana (Mouse-ear cress)).